Reading from the N-terminus, the 244-residue chain is Triosephosphate isomerase (244 aa).

9 to 11 (NWK) contacts substrate. Histidine 93 functions as the Electrophile in the catalytic mechanism. Residue glutamate 160 is the Proton acceptor of the active site. 2 residues coordinate substrate: glycine 166 and serine 206.

Belongs to the triosephosphate isomerase family. Homodimer.

The protein resides in the cytoplasm. It carries out the reaction D-glyceraldehyde 3-phosphate = dihydroxyacetone phosphate. Its pathway is carbohydrate biosynthesis; gluconeogenesis. The protein operates within carbohydrate degradation; glycolysis; D-glyceraldehyde 3-phosphate from glycerone phosphate: step 1/1. In terms of biological role, involved in the gluconeogenesis. Catalyzes stereospecifically the conversion of dihydroxyacetone phosphate (DHAP) to D-glyceraldehyde-3-phosphate (G3P). The sequence is that of Triosephosphate isomerase from Mycoplasma genitalium (strain ATCC 33530 / DSM 19775 / NCTC 10195 / G37) (Mycoplasmoides genitalium).